A 223-amino-acid polypeptide reads, in one-letter code: Ribosome maturation factor RimM (223 aa).

The segment covering 1 to 12 has biased composition (low complexity); that stretch reads MARRPGSSSRGP. Disordered stretches follow at residues 1-44 and 204-223; these read MARR…DPGL and ADPP…DDPG. Residues 136 to 210 form the PRC barrel domain; it reads EDEFFLTDLI…KVVADPPDDL (75 aa).

The protein belongs to the RimM family. In terms of assembly, binds ribosomal protein uS19.

It localises to the cytoplasm. Its function is as follows. An accessory protein needed during the final step in the assembly of 30S ribosomal subunit, possibly for assembly of the head region. Essential for efficient processing of 16S rRNA. May be needed both before and after RbfA during the maturation of 16S rRNA. It has affinity for free ribosomal 30S subunits but not for 70S ribosomes. The protein is Ribosome maturation factor RimM of Methylorubrum extorquens (strain PA1) (Methylobacterium extorquens).